The following is a 119-amino-acid chain: UPF0342 protein Athe_0692 (119 aa).

This sequence belongs to the UPF0342 family.

The polypeptide is UPF0342 protein Athe_0692 (Caldicellulosiruptor bescii (strain ATCC BAA-1888 / DSM 6725 / KCTC 15123 / Z-1320) (Anaerocellum thermophilum)).